Here is a 180-residue protein sequence, read N- to C-terminus: Large ribosomal subunit protein uL5 (180 aa).

Belongs to the universal ribosomal protein uL5 family. In terms of assembly, part of the 50S ribosomal subunit; part of the 5S rRNA/L5/L18/L25 subcomplex. Contacts the 5S rRNA and the P site tRNA. Forms a bridge to the 30S subunit in the 70S ribosome.

Functionally, this is one of the proteins that bind and probably mediate the attachment of the 5S RNA into the large ribosomal subunit, where it forms part of the central protuberance. In the 70S ribosome it contacts protein S13 of the 30S subunit (bridge B1b), connecting the 2 subunits; this bridge is implicated in subunit movement. Contacts the P site tRNA; the 5S rRNA and some of its associated proteins might help stabilize positioning of ribosome-bound tRNAs. This chain is Large ribosomal subunit protein uL5, found in Lactobacillus helveticus (strain DPC 4571).